We begin with the raw amino-acid sequence, 552 residues long: Putative acetolactate synthase large subunit IlvB2 (552 aa).

Position 48 (Glu-48) interacts with thiamine diphosphate. FAD contacts are provided by residues 262 to 285 (FGDG…VGVS) and 309 to 328 (DPDP…ITTS). Residues 394 to 474 (TCISWTFRGI…VTWAVLNDGQ (81 aa)) form a thiamine pyrophosphate binding region. Asp-445 provides a ligand contact to Mg(2+).

Belongs to the TPP enzyme family. As to quaternary structure, heterodimer of large catalytic subunit and small regulatory subunit. Requires Mg(2+) as cofactor. Thiamine diphosphate is required as a cofactor.

The enzyme catalyses 2 pyruvate + H(+) = (2S)-2-acetolactate + CO2. It participates in amino-acid biosynthesis; L-isoleucine biosynthesis; L-isoleucine from 2-oxobutanoate: step 1/4. The protein operates within amino-acid biosynthesis; L-valine biosynthesis; L-valine from pyruvate: step 1/4. Catalyzes the conversion of 2 pyruvate molecules into acetolactate in the first common step of the biosynthetic pathway of the branched-amino acids such as leucine, isoleucine, and valine. In Mycobacterium tuberculosis (strain ATCC 25618 / H37Rv), this protein is Putative acetolactate synthase large subunit IlvB2 (ilvB2).